The sequence spans 273 residues: Large ribosomal subunit protein uL2c (273 aa).

Polar residues predominate over residues 1-31; that stretch reads MAIHLSKTSSPSTRNGAVNSQVKSNSRNRLI. Disordered regions lie at residues 1 to 53 and 222 to 273; these read MAIH…GHRG and MNPV…RRSK.

Belongs to the universal ribosomal protein uL2 family. Part of the 50S ribosomal subunit.

It is found in the plastid. The protein resides in the chloroplast. In Pisum sativum (Garden pea), this protein is Large ribosomal subunit protein uL2c (rpl2).